A 43-amino-acid chain; its full sequence is METATLVTIFLSGLLVSFTGYALYTAFGQPSQQLRDPFEEHGD.

Residues 7–29 (VTIFLSGLLVSFTGYALYTAFGQ) traverse the membrane as a helical segment.

It belongs to the PsbN family.

It localises to the plastid. Its subcellular location is the chloroplast thylakoid membrane. In terms of biological role, may play a role in photosystem I and II biogenesis. The polypeptide is Protein PsbN (Ipomoea purpurea (Common morning glory)).